Reading from the N-terminus, the 156-residue chain is Putative pre-16S rRNA nuclease (156 aa).

It belongs to the YqgF nuclease family.

The protein resides in the cytoplasm. Functionally, could be a nuclease involved in processing of the 5'-end of pre-16S rRNA. This Bartonella tribocorum (strain CIP 105476 / IBS 506) protein is Putative pre-16S rRNA nuclease.